Reading from the N-terminus, the 366-residue chain is MEKEGVKNYLVLVVDIDDDIGRKAGLNTPILGREENIKALIKLGLADPGDSDVNAILGGVKIYDELKASGKDVEIATISGDVDVESEKCALRIKEQIDFLLYLYNPDFIYLVSDGKEDEMILKYLESKNIFVWKKRVIVKQSETLESTYYLIQEFIKKTMEEYIPLILTFIGFSLILYAIFADIGWRIVVGIIGLYILSEGVGVRKLLMEKIKKKEEFDVGRVFPISASISIFILIIGLIYSLSSINKTSSTLTEFIGEFLLHFVDSLTLSLLILMVGKFVDTIINSEKDLLEILKKYFFCLICIFISRELIISGGEYLLKKISFIMFVMCVIIYISIVIILSVILFTKSSKEDKFKKLKNSITKG.

The next 6 membrane-spanning stretches (helical) occupy residues 164-184 (IPLILTFIGFSLILYAIFADI), 188-208 (IVVGIIGLYILSEGVGVRKLL), 223-243 (VFPISASISIFILIIGLIYSL), 256-276 (FIGEFLLHFVDSLTLSLLILM), 299-319 (FFCLICIFISRELIISGGEYL), and 325-345 (FIMFVMCVIIYISIVIILSVI).

This sequence to A.fulgidus AF2058.

It is found in the cell membrane. This is an uncharacterized protein from Methanocaldococcus jannaschii (strain ATCC 43067 / DSM 2661 / JAL-1 / JCM 10045 / NBRC 100440) (Methanococcus jannaschii).